The sequence spans 349 residues: Putative phytanoyl-CoA dioxygenase (349 aa).

2-oxoglutarate contacts are provided by residues K118 and 169-171 (HLD). Residues H169 and D171 each coordinate Fe cation.

Belongs to the PhyH family. It depends on Fe cation as a cofactor. L-ascorbate is required as a cofactor.

The catalysed reaction is phytanoyl-CoA + 2-oxoglutarate + O2 = 2-hydroxyphytanoyl-CoA + succinate + CO2. It functions in the pathway lipid metabolism; fatty acid metabolism. Functionally, converts phytanoyl-CoA to 2-hydroxyphytanoyl-CoA. In Dictyostelium discoideum (Social amoeba), this protein is Putative phytanoyl-CoA dioxygenase.